The primary structure comprises 1172 residues: Lysylphosphatidylglycerol biosynthesis bifunctional protein LysX (1172 aa).

Residues Met-1–Arg-34 are disordered. The phosphatidylglycerol lysyltransferase stretch occupies residues Met-1–Asp-663. Over residues Val-17 to Asp-31 the composition is skewed to polar residues. The next 7 helical transmembrane spans lie at Val-80 to Val-100, Phe-122 to Ala-142, Ile-146 to Ile-166, Phe-177 to Tyr-197, Ala-214 to Phe-234, Ala-272 to Ser-292, and Val-612 to Ser-632. Residues Val-664–His-1172 are lysine--tRNA ligase. The segment at residues Val-726–Ile-804 is a DNA-binding region (OB). Mg(2+)-binding residues include Asp-1084 and Glu-1091.

This sequence in the N-terminal section; belongs to the LPG synthetase family. The protein in the C-terminal section; belongs to the class-II aminoacyl-tRNA synthetase family. The cofactor is Mg(2+).

Its subcellular location is the cell membrane. The enzyme catalyses tRNA(Lys) + L-lysine + ATP = L-lysyl-tRNA(Lys) + AMP + diphosphate. The catalysed reaction is L-lysyl-tRNA(Lys) + a 1,2-diacyl-sn-glycero-3-phospho-(1'-sn-glycerol) = a 1,2-diacyl-sn-glycero-3-phospho-1'-(3'-O-L-lysyl)-sn-glycerol + tRNA(Lys). Its function is as follows. Catalyzes the production of L-lysyl-tRNA(Lys)transfer and the transfer of a lysyl group from L-lysyl-tRNA(Lys) to membrane-bound phosphatidylglycerol (PG), which produces lysylphosphatidylglycerol (LPG), one of the components of the bacterial membrane with a positive net charge. LPG synthesis contributes to the resistance to cationic antimicrobial peptides (CAMPs) and likely protects M.tuberculosis against the CAMPs produced by competiting microorganisms (bacteriocins). In fact, the modification of anionic phosphatidylglycerol with positively charged L-lysine results in repulsion of the peptides. The sequence is that of Lysylphosphatidylglycerol biosynthesis bifunctional protein LysX (lysX) from Mycobacterium bovis (strain ATCC BAA-935 / AF2122/97).